The primary structure comprises 157 residues: MGIIDFFMALMQDMILSAIPAVGFAMVFNVPHRALPWCALLGALGHGSRMLMMSAGFNIEWSTFMASLLVGSIGIQWSRWYLAHPKVFTVAAVIPMFPGISAYTAMISAVKISHLGYSEPMMITLLTNFLKASSIVGALSIGLSVPGLWLYRKRPRV.

A run of 4 helical transmembrane segments spans residues 6–26, 55–75, 87–107, and 129–149; these read FFMA…GFAM, AGFN…SIGI, VFTV…TAMI, and FLKA…PGLW.

Belongs to the ThrE exporter (TC 2.A.79) family. In terms of assembly, the transporter is composed of YjjB and YjjP.

Its subcellular location is the cell inner membrane. Functionally, involved in succinate export with YjjP. Both proteins are required for export. This is Probable succinate transporter subunit YjjB from Salmonella arizonae (strain ATCC BAA-731 / CDC346-86 / RSK2980).